A 248-amino-acid chain; its full sequence is tRNA N(3)-methylcytidine methyltransferase trm141 (248 aa).

W23, Y27, G63, D86, D112, and I133 together coordinate S-adenosyl-L-methionine.

Belongs to the methyltransferase superfamily. METL family.

It is found in the cytoplasm. Its subcellular location is the nucleus. The catalysed reaction is cytidine(32) in tRNA(Ser) + S-adenosyl-L-methionine = N(3)-methylcytidine(32) in tRNA(Ser) + S-adenosyl-L-homocysteine + H(+). Its function is as follows. S-adenosyl-L-methionine-dependent methyltransferase that mediates N(3)-methylcytidine modification of residue 32 of the tRNA anticodon loop of tRNA(Ser). N(3)-methylcytidine methylation by trm141 requires the formation of N(6)-dimethylallyladenosine(37) (i6A37) by tit1 as prerequisite. Does not catalyze N(3)-methylcytidine modification of tRNA(Thr). This is tRNA N(3)-methylcytidine methyltransferase trm141 from Schizosaccharomyces pombe (strain 972 / ATCC 24843) (Fission yeast).